The chain runs to 184 residues: Photosystem I assembly protein Ycf4 (184 aa).

2 helical membrane passes run Phe22–Ser42 and Ile57–Ser77.

This sequence belongs to the Ycf4 family.

It is found in the plastid. The protein localises to the chloroplast thylakoid membrane. Functionally, seems to be required for the assembly of the photosystem I complex. The polypeptide is Photosystem I assembly protein Ycf4 (Ceratophyllum demersum (Rigid hornwort)).